A 275-amino-acid chain; its full sequence is Collectin-10 (275 aa).

Positions 1–25 (MKYGKLWPIGVSVLGVIALHVRVLS) are cleaved as a signal peptide. N-linked (GlcNAc...) asparagine glycosylation is present at Asn30. The segment at 39–76 (THTILPGPKGDDGEAGDTGVLGKLGKDGPKGQKGNKGI) is disordered. One can recognise a Collagen-like domain in the interval 51 to 110 (GEAGDTGVLGKLGKDGPKGQKGNKGIIGDSGDLGLIGKIGPIGSKGDKGHKGLPGLPGGK). The C-type lectin domain occupies 153 to 269 (TDEKYYYIVR…CSLTIYFVCE (117 aa)). Disulfide bonds link Cys174–Cys268 and Cys246–Cys260.

The protein belongs to the COLEC10/COLEC11 family.

It localises to the secreted. Its function is as follows. Lectin that binds to various sugars: galactose &gt; mannose = fucose &gt; N-acetylglucosamine &gt; N-acetylgalactosamine. The sequence is that of Collectin-10 (colec10) from Xenopus tropicalis (Western clawed frog).